The chain runs to 461 residues: Bifunctional protein GlmU (461 aa).

The tract at residues 1–232 (MNLQIIILAA…SFEVQGINNR (232 aa)) is pyrophosphorylase. Residues 8–11 (LAAG), lysine 22, glutamine 73, and 78–79 (GT) each bind UDP-N-acetyl-alpha-D-glucosamine. Aspartate 102 is a Mg(2+) binding site. Residues glycine 142, glutamate 157, and asparagine 230 each contribute to the UDP-N-acetyl-alpha-D-glucosamine site. Asparagine 230 is a binding site for Mg(2+). Positions 233 to 253 (QQLQQLERIWQQRAANQLMEK) are linker. Positions 254–461 (GVTLADANRF…WKRPAKRERD (208 aa)) are N-acetyltransferase. UDP-N-acetyl-alpha-D-glucosamine-binding residues include arginine 336 and lysine 354. Histidine 366 (proton acceptor) is an active-site residue. UDP-N-acetyl-alpha-D-glucosamine is bound by residues tyrosine 369 and asparagine 380. Residues alanine 383, 389–390 (NY), serine 408, and alanine 426 each bind acetyl-CoA.

It in the N-terminal section; belongs to the N-acetylglucosamine-1-phosphate uridyltransferase family. This sequence in the C-terminal section; belongs to the transferase hexapeptide repeat family. Homotrimer. The cofactor is Mg(2+).

The protein resides in the cytoplasm. It carries out the reaction alpha-D-glucosamine 1-phosphate + acetyl-CoA = N-acetyl-alpha-D-glucosamine 1-phosphate + CoA + H(+). It catalyses the reaction N-acetyl-alpha-D-glucosamine 1-phosphate + UTP + H(+) = UDP-N-acetyl-alpha-D-glucosamine + diphosphate. It participates in nucleotide-sugar biosynthesis; UDP-N-acetyl-alpha-D-glucosamine biosynthesis; N-acetyl-alpha-D-glucosamine 1-phosphate from alpha-D-glucosamine 6-phosphate (route II): step 2/2. Its pathway is nucleotide-sugar biosynthesis; UDP-N-acetyl-alpha-D-glucosamine biosynthesis; UDP-N-acetyl-alpha-D-glucosamine from N-acetyl-alpha-D-glucosamine 1-phosphate: step 1/1. The protein operates within bacterial outer membrane biogenesis; LPS lipid A biosynthesis. In terms of biological role, catalyzes the last two sequential reactions in the de novo biosynthetic pathway for UDP-N-acetylglucosamine (UDP-GlcNAc). The C-terminal domain catalyzes the transfer of acetyl group from acetyl coenzyme A to glucosamine-1-phosphate (GlcN-1-P) to produce N-acetylglucosamine-1-phosphate (GlcNAc-1-P), which is converted into UDP-GlcNAc by the transfer of uridine 5-monophosphate (from uridine 5-triphosphate), a reaction catalyzed by the N-terminal domain. The chain is Bifunctional protein GlmU from Legionella pneumophila (strain Lens).